The primary structure comprises 448 residues: Exodeoxyribonuclease 7 large subunit (448 aa).

This sequence belongs to the XseA family. In terms of assembly, heterooligomer composed of large and small subunits.

It localises to the cytoplasm. It catalyses the reaction Exonucleolytic cleavage in either 5'- to 3'- or 3'- to 5'-direction to yield nucleoside 5'-phosphates.. Bidirectionally degrades single-stranded DNA into large acid-insoluble oligonucleotides, which are then degraded further into small acid-soluble oligonucleotides. This is Exodeoxyribonuclease 7 large subunit from Nitrosomonas europaea (strain ATCC 19718 / CIP 103999 / KCTC 2705 / NBRC 14298).